A 561-amino-acid polypeptide reads, in one-letter code: DISARM protein DrmB (561 aa).

The protein localises to the cytoplasm. Its function is as follows. Component of antiviral defense system DISARM (defense island system associated with restriction-modification), composed of DrmE, DrmA, DrmB, DrmC and DrmMII. DISARM is probably a multi-gene restriction module, this subunit has an unknown function. Expression of DISARM in B.subtilis (strain BEST7003) confers resistance to phages Nf, phi29, phi105, phi3T, SPO1, SPR and SPP1. Protection is over 10(7)-fold against phi3T, 10(4)-10(5)-fold against Nf, phi29, phi105 and SPR, 100-fold against SPO1 and 10-fold against SPP1. DISARM does not interfere with phage adsorption, but instead interferes with (phi3T) DNA replication early in its cycle, preventing replication, circularization and lysogeny and probably causes phage DNA degradation (DNA is degraded in SPP1-infected cells). In Bacillus paralicheniformis (strain ATCC 9945a / NCIMB 11709 / CD-2), this protein is DISARM protein DrmB.